The following is a 760-amino-acid chain: Prolyl endopeptidase (760 aa).

Residues Ser609, Asp693, and His730 each act as charge relay system in the active site.

This sequence belongs to the peptidase S9A family.

Its subcellular location is the cytoplasm. The catalysed reaction is Hydrolysis of Pro-|-Xaa &gt;&gt; Ala-|-Xaa in oligopeptides.. Its activity is regulated as follows. Inhibited by chymostatin, Boc-Glu(NHO-Bz)-Pyrrolidide, Z-Pro-L-prolinal dimethyacetal and the peptide H-H-L-P-P-P-V-OH. In terms of biological role, cleaves peptide bonds on the C-terminal side of prolyl residues within peptides that are up to approximately 30 amino acids long. In Dictyostelium discoideum (Social amoeba), this protein is Prolyl endopeptidase (prep).